The primary structure comprises 102 residues: Small ribosomal subunit protein eS24 (102 aa).

The protein belongs to the eukaryotic ribosomal protein eS24 family.

The sequence is that of Small ribosomal subunit protein eS24 from Halorubrum lacusprofundi (strain ATCC 49239 / DSM 5036 / JCM 8891 / ACAM 34).